An 882-amino-acid polypeptide reads, in one-letter code: MTELSPKYNPAEVEAGRYQKWLDADVFKPSGDQKAKPYSIVIPPPNVTGKLHLGHAWDTTLQDIIIRQKRMQGFDTLWLPGMDHAGIATQAKVEERLREQGISRYDLGRDKFLDKVWEWKDEYATTIKEQWGKMGLSVDYSRERFTLDEGLSKAVRKVFVDLYKKGWIYRGEFIINWDPAARTALSDIEVIHKDVEGAFYHMNYMLEDGSRALQVATTRPETMFGDVAVAVNPEDPRYKDLIGKNVILPIVNKLIPIVGDEHADPEFGTGVVKITPAHDPNDFEVGQRHNLPQVNVMNDDGTMNELAGDFAGMDRFEARQATVAKLEELGALVNIEKRVHSVGHSERSGAVVEPRLSTQWFVKMDELAKQAMDNQETDNRVDFYPPRFNDTFLQWMENVHDWVISRQLWWGHQIPAWYNAEGEIYVGEEAPEGDGWTQDEDVLDTWFSSALWPFSTMGWPDTDVEDFKRYFPTSTLVTGYDIIFFWVSRMIFQSLEFTGRQPFQNVLIHGLIRDEEGRKMSKSLGNGIDPMDVIEKYGADSLRWFLSNGSAPGQDVRFSYEKMDASWNFINKIWNISRYILMNNEGLTLEEAESNVAKVAASEAGNVTDQWILHNLNETIAKVTENFDKFEFGVAGHILYNFIWEEFANWYVELTKEVLYSDNEAEKVITRSVLLYTLDKIVRLLHPIMPFVTEEIYAQYAQGSIVTVDYPVVRPAFENEAAHKGVERLKDLIRAVRNARAEVNVAPSKPITILVKTADSELEDFFTSNVNYIKRFTNPEKLEISSAIAAPELAMTSIITGAEIYLPLADLLNVEEELARLDKELAKWQKELDMVGKKLGNERFVANAKPEVIQKEKDKQADYQAKYDATQERIAEMKKIKS.

Residues 45-55 (PNVTGKLHLGH) carry the 'HIGH' region motif. The 'KMSKS' region signature appears at 519–523 (KMSKS). Lys-522 contacts ATP. Residues 808–882 (LADLLNVEEE…RIAEMKKIKS (75 aa)) are a coiled coil.

The protein belongs to the class-I aminoacyl-tRNA synthetase family. ValS type 1 subfamily. In terms of assembly, monomer.

It is found in the cytoplasm. The enzyme catalyses tRNA(Val) + L-valine + ATP = L-valyl-tRNA(Val) + AMP + diphosphate. Functionally, catalyzes the attachment of valine to tRNA(Val). As ValRS can inadvertently accommodate and process structurally similar amino acids such as threonine, to avoid such errors, it has a 'posttransfer' editing activity that hydrolyzes mischarged Thr-tRNA(Val) in a tRNA-dependent manner. The polypeptide is Valine--tRNA ligase (Streptococcus pyogenes serotype M28 (strain MGAS6180)).